The sequence spans 116 residues: Flagellar transcriptional regulator FlhD (116 aa).

The protein belongs to the FlhD family. Homodimer; disulfide-linked. Forms a heterohexamer composed of two FlhC and four FlhD subunits. Each FlhC binds a FlhD dimer, forming a heterotrimer, and a hexamer assembles by dimerization of two heterotrimers.

The protein localises to the cytoplasm. Its function is as follows. Functions in complex with FlhC as a master transcriptional regulator that regulates transcription of several flagellar and non-flagellar operons by binding to their promoter region. Activates expression of class 2 flagellar genes, including fliA, which is a flagellum-specific sigma factor that turns on the class 3 genes. Also regulates genes whose products function in a variety of physiological pathways. The polypeptide is Flagellar transcriptional regulator FlhD (Escherichia coli O157:H7).